Here is an 807-residue protein sequence, read N- to C-terminus: Probable phosphoketolase (807 aa).

This sequence belongs to the XFP family. Requires thiamine diphosphate as cofactor.

This is Probable phosphoketolase from Mesorhizobium japonicum (strain LMG 29417 / CECT 9101 / MAFF 303099) (Mesorhizobium loti (strain MAFF 303099)).